Here is a 60-residue protein sequence, read N- to C-terminus: Large ribosomal subunit protein bL32 (60 aa).

The tract at residues 1 to 23 (MAVPRNRHSNARKNIRRSHHAKK) is disordered.

This sequence belongs to the bacterial ribosomal protein bL32 family.

The polypeptide is Large ribosomal subunit protein bL32 (Chlamydia caviae (strain ATCC VR-813 / DSM 19441 / 03DC25 / GPIC) (Chlamydophila caviae)).